Consider the following 372-residue polypeptide: Beta-1,3-N-acetylglucosaminyltransferase radical fringe (372 aa).

At 1–10 (MNSSCLGLRR) the chain is on the cytoplasmic side. The chain crosses the membrane as a helical; Signal-anchor for type II membrane protein span at residues 11–27 (TCFLLSVTAAAVLLLLL). Residues 28–372 (PRGQPPAAPR…TIWCPNKKMS (345 aa)) lie on the Lumenal side of the membrane. Residues 30-48 (GQPPAAPRRRPPPAGPSRP) are compositionally biased toward pro residues. The interval 30-96 (GQPPAAPRRR…RVRMGPPGGS (67 aa)) is disordered. The span at 64–78 (DRGGGSGAAGGGRGV) shows a compositional bias: gly residues. R120 provides a ligand contact to substrate. N159 is a glycosylation site (N-linked (GlcNAc...) asparagine). Disulfide bonds link C160-C171 and C189-C253. D193 is a substrate binding site. Mn(2+) is bound at residue D194. D283 is an active-site residue. Residue H307 participates in Mn(2+) binding. An intrachain disulfide couples C357 to C366.

The protein belongs to the glycosyltransferase 31 family. Requires Mn(2+) as cofactor.

It is found in the golgi apparatus membrane. It catalyses the reaction 3-O-(alpha-L-fucosyl)-L-threonyl-[EGF-like domain protein] + UDP-N-acetyl-alpha-D-glucosamine = 3-O-(N-acetyl-beta-D-glucosaminyl-(1-&gt;3)-alpha-L-fucosyl)-L-threonyl-[EGF-like domain protein] + UDP + H(+). The enzyme catalyses 3-O-(alpha-L-fucosyl)-L-seryl-[EGF-like domain protein] + UDP-N-acetyl-alpha-D-glucosamine = 3-O-(N-acetyl-beta-D-glucosaminyl-(1-&gt;3)-alpha-L-fucosyl)-L-seryl-[EGF-like domain protein] + UDP + H(+). Functionally, glycosyltransferase that initiates the elongation of O-linked fucose residues attached to EGF-like repeats in the extracellular domain of Notch molecules. Plays an important role in limb outgrowth, it directs the formation and positioning of the apical ectodermal ridge (AER), one of the key organizer centers of vertebrate limb development. This is Beta-1,3-N-acetylglucosaminyltransferase radical fringe (RFNG) from Gallus gallus (Chicken).